The sequence spans 587 residues: Potassium-transporting ATPase potassium-binding subunit (587 aa).

The next 4 helical transmembrane spans lie at 1-21 (MSTSVAGVLAVALLVAALWVT), 60-80 (PVYARSVLAFSLVSVLLLYLL), 89-109 (LNLGFGAVGPALAWNTAVSFM), and 131-151 (GLAVQNFVSAAVGIAVAIAVV). The interval 162–188 (AVGGPGGPNGPGGPGGPNGPGAGSRDD) is disordered. The segment covering 164–183 (GGPGGPNGPGGPGGPNGPGA) has biased composition (gly residues). A run of 7 helical transmembrane segments spans residues 208 to 228 (IRILLPVCVIAAIVLVAGGAI), 280 to 300 (PTSWTNLVEIFLLLAIAFSLP), 314 to 334 (LAIVAVMAVLALGSFAVNAAF), 409 to 429 (GLYGMLVLAVVTVFVAGLMIG), 449 to 469 (LYFLATPAIALLGTGVAMGLP), 514 to 534 (ALGLAMLFGRLLPMLLVLGMA), and 557 to 577 (FAGMLGAIALIIVALTFFPAL).

It belongs to the KdpA family. As to quaternary structure, the system is composed of three essential subunits: KdpA, KdpB and KdpC.

It localises to the cell membrane. Part of the high-affinity ATP-driven potassium transport (or Kdp) system, which catalyzes the hydrolysis of ATP coupled with the electrogenic transport of potassium into the cytoplasm. This subunit binds the extracellular potassium ions and delivers the ions to the membrane domain of KdpB through an intramembrane tunnel. This chain is Potassium-transporting ATPase potassium-binding subunit, found in Frankia alni (strain DSM 45986 / CECT 9034 / ACN14a).